The chain runs to 604 residues: Glucoamylase 1 (604 aa).

The N-terminal stretch at 1 to 25 (MQLFNLPLKVSFFLVLSYFSLLVSA) is a signal peptide. Residues 26 to 115 (ASIPSSASVQ…EFYIKYEVSG (90 aa)) are adsorption to raw starch. Residues 26 to 130 (ASIPSSASVQ…NNNSANYQVS (105 aa)) form the CBM21 domain. The interval 116 to 604 (KTYYDNNNSA…SYAKAGAPAA (489 aa)) is starch degradation. N122 carries N-linked (GlcNAc...) asparagine glycosylation. Positions 127–164 (YQVSTSKPTTTTATATTTTAPSTSTTTPPSRSEPATFP) are disordered. The segment covering 130–162 (STSKPTTTTATATTTTAPSTSTTTPPSRSEPAT) has biased composition (low complexity). 3 N-linked (GlcNAc...) asparagine glycosylation sites follow: N167, N230, and N236. Substrate is bound at residue W279. D336 (proton acceptor) is an active-site residue. E339 functions as the Proton donor in the catalytic mechanism. A glycan (N-linked (GlcNAc...) asparagine) is linked at N564.

Belongs to the glycosyl hydrolase 15 family.

It catalyses the reaction Hydrolysis of terminal (1-&gt;4)-linked alpha-D-glucose residues successively from non-reducing ends of the chains with release of beta-D-glucose.. The sequence is that of Glucoamylase 1 from Rhizopus oryzae (Mucormycosis agent).